A 1168-amino-acid chain; its full sequence is Transcription-repair-coupling factor (1168 aa).

A Helicase ATP-binding domain is found at 633 to 794 (DMQKSRPMDR…MLGVRDLSVI (162 aa)). Residue 646–653 (GDVGYGKT) coordinates ATP. Residues 747–750 (DEEQ) carry the DEEQ box motif. Residues 808 to 969 (VLEQNMSFIK…GFKIAMRDLN (162 aa)) enclose the Helicase C-terminal domain.

It in the N-terminal section; belongs to the UvrB family. In the C-terminal section; belongs to the helicase family. RecG subfamily.

The protein localises to the cytoplasm. Couples transcription and DNA repair by recognizing RNA polymerase (RNAP) stalled at DNA lesions. Mediates ATP-dependent release of RNAP and its truncated transcript from the DNA, and recruitment of nucleotide excision repair machinery to the damaged site. This chain is Transcription-repair-coupling factor, found in Staphylococcus aureus (strain USA300).